The following is a 163-amino-acid chain: Phosphopantetheine adenylyltransferase (163 aa).

T9 lines the substrate pocket. ATP-binding positions include 9 to 10 (TF) and H17. Substrate is bound by residues K41, L73, and R87. Residues 88–90 (GLR), E98, and 123–129 (YQFISGT) contribute to the ATP site.

It belongs to the bacterial CoaD family. As to quaternary structure, homohexamer. It depends on Mg(2+) as a cofactor.

The protein localises to the cytoplasm. The catalysed reaction is (R)-4'-phosphopantetheine + ATP + H(+) = 3'-dephospho-CoA + diphosphate. It functions in the pathway cofactor biosynthesis; coenzyme A biosynthesis; CoA from (R)-pantothenate: step 4/5. Its function is as follows. Reversibly transfers an adenylyl group from ATP to 4'-phosphopantetheine, yielding dephospho-CoA (dPCoA) and pyrophosphate. The polypeptide is Phosphopantetheine adenylyltransferase (Herminiimonas arsenicoxydans).